The following is a 421-amino-acid chain: Peroxisomal succinyl-coenzyme A thioesterase (421 aa).

Ser232 (charge relay system) is an active-site residue. Lys313 is modified (N6-succinyllysine). Residues Asp326 and His360 each act as charge relay system in the active site. Residues 419-421 carry the Microbody targeting signal motif; sequence CRL.

It belongs to the C/M/P thioester hydrolase family. In terms of tissue distribution, mainly expressed in liver and kidney. Weakly expressed in other tissues including intestine, adrenal gland and adipose tissues.

Its subcellular location is the peroxisome. The enzyme catalyses succinyl-CoA + H2O = succinate + CoA + H(+). It carries out the reaction glutaryl-CoA + H2O = glutarate + CoA + H(+). It functions in the pathway lipid metabolism; fatty acid metabolism. Its function is as follows. Catalyzes the hydrolysis of acyl-CoAs into free fatty acids and coenzyme A (CoASH), regulating their respective intracellular levels. In contrast to its human ortholog, functions essentially as a succinyl-CoA thioesterase with no activity with medium to long chain saturated acyl-CoAs and with a low activity toward glutaryl-CoA. This is Peroxisomal succinyl-coenzyme A thioesterase (Acot4) from Mus musculus (Mouse).